Reading from the N-terminus, the 130-residue chain is Putative pre-16S rRNA nuclease (130 aa).

Belongs to the YqgF nuclease family.

The protein localises to the cytoplasm. In terms of biological role, could be a nuclease involved in processing of the 5'-end of pre-16S rRNA. The protein is Putative pre-16S rRNA nuclease of Buchnera aphidicola subsp. Cinara cedri (strain Cc).